The following is a 417-amino-acid chain: Serine hydroxymethyltransferase (417 aa).

Residues Leu-121 and 125 to 127 (GHL) contribute to the (6S)-5,6,7,8-tetrahydrofolate site. At Lys-229 the chain carries N6-(pyridoxal phosphate)lysine. 355 to 357 (SPF) is a (6S)-5,6,7,8-tetrahydrofolate binding site.

This sequence belongs to the SHMT family. Homodimer. It depends on pyridoxal 5'-phosphate as a cofactor.

It is found in the cytoplasm. It catalyses the reaction (6R)-5,10-methylene-5,6,7,8-tetrahydrofolate + glycine + H2O = (6S)-5,6,7,8-tetrahydrofolate + L-serine. It functions in the pathway one-carbon metabolism; tetrahydrofolate interconversion. It participates in amino-acid biosynthesis; glycine biosynthesis; glycine from L-serine: step 1/1. Catalyzes the reversible interconversion of serine and glycine with tetrahydrofolate (THF) serving as the one-carbon carrier. This reaction serves as the major source of one-carbon groups required for the biosynthesis of purines, thymidylate, methionine, and other important biomolecules. Also exhibits THF-independent aldolase activity toward beta-hydroxyamino acids, producing glycine and aldehydes, via a retro-aldol mechanism. The chain is Serine hydroxymethyltransferase from Salmonella schwarzengrund (strain CVM19633).